Here is a 673-residue protein sequence, read N- to C-terminus: DNA ligase (673 aa).

NAD(+)-binding positions include 33–37, 82–83, and glutamate 117; these read DSVYD and SL. Lysine 119 functions as the N6-AMP-lysine intermediate in the catalytic mechanism. Residues arginine 140, glutamate 177, lysine 295, and lysine 319 each coordinate NAD(+). 4 residues coordinate Zn(2+): cysteine 413, cysteine 416, cysteine 431, and cysteine 436. The BRCT domain occupies 595–673; sequence AVSQVLAGKK…EAELLALDPK (79 aa).

The protein belongs to the NAD-dependent DNA ligase family. LigA subfamily. Mg(2+) is required as a cofactor. It depends on Mn(2+) as a cofactor.

It carries out the reaction NAD(+) + (deoxyribonucleotide)n-3'-hydroxyl + 5'-phospho-(deoxyribonucleotide)m = (deoxyribonucleotide)n+m + AMP + beta-nicotinamide D-nucleotide.. Its function is as follows. DNA ligase that catalyzes the formation of phosphodiester linkages between 5'-phosphoryl and 3'-hydroxyl groups in double-stranded DNA using NAD as a coenzyme and as the energy source for the reaction. It is essential for DNA replication and repair of damaged DNA. The sequence is that of DNA ligase from Synechococcus sp. (strain JA-3-3Ab) (Cyanobacteria bacterium Yellowstone A-Prime).